A 356-amino-acid chain; its full sequence is Dual-specificity RNA methyltransferase RlmN (356 aa).

The Proton acceptor role is filled by Glu-92. The Radical SAM core domain occupies Glu-98–Asp-334. An intrachain disulfide couples Cys-105 to Cys-337. Cys-112, Cys-116, and Cys-119 together coordinate [4Fe-4S] cluster. S-adenosyl-L-methionine is bound by residues Gly-162 to Glu-163, Ser-194, Ser-216 to His-218, and Asn-294. Catalysis depends on Cys-337, which acts as the S-methylcysteine intermediate.

The protein belongs to the radical SAM superfamily. RlmN family. [4Fe-4S] cluster is required as a cofactor.

The protein resides in the cytoplasm. It catalyses the reaction adenosine(2503) in 23S rRNA + 2 reduced [2Fe-2S]-[ferredoxin] + 2 S-adenosyl-L-methionine = 2-methyladenosine(2503) in 23S rRNA + 5'-deoxyadenosine + L-methionine + 2 oxidized [2Fe-2S]-[ferredoxin] + S-adenosyl-L-homocysteine. The enzyme catalyses adenosine(37) in tRNA + 2 reduced [2Fe-2S]-[ferredoxin] + 2 S-adenosyl-L-methionine = 2-methyladenosine(37) in tRNA + 5'-deoxyadenosine + L-methionine + 2 oxidized [2Fe-2S]-[ferredoxin] + S-adenosyl-L-homocysteine. In terms of biological role, specifically methylates position 2 of adenine 2503 in 23S rRNA and position 2 of adenine 37 in tRNAs. m2A2503 modification seems to play a crucial role in the proofreading step occurring at the peptidyl transferase center and thus would serve to optimize ribosomal fidelity. The chain is Dual-specificity RNA methyltransferase RlmN from Vesicomyosocius okutanii subsp. Calyptogena okutanii (strain HA).